The sequence spans 225 residues: Uracil-DNA glycosylase (225 aa).

Catalysis depends on Asp65, which acts as the Proton acceptor.

It belongs to the uracil-DNA glycosylase (UDG) superfamily. UNG family.

The protein localises to the cytoplasm. It carries out the reaction Hydrolyzes single-stranded DNA or mismatched double-stranded DNA and polynucleotides, releasing free uracil.. Its function is as follows. Excises uracil residues from the DNA which can arise as a result of misincorporation of dUMP residues by DNA polymerase or due to deamination of cytosine. The polypeptide is Uracil-DNA glycosylase (Bacillus cereus (strain AH187)).